Here is a 377-residue protein sequence, read N- to C-terminus: Chaperone protein DnaJ (377 aa).

The region spanning 4–69 is the J domain; sequence DYYEVLGVSK…EKRARYDQMG (66 aa). The CR-type zinc finger occupies 131 to 213; sequence GTEKEIQVPR…CSGKGTTRKV (83 aa). Residues cysteine 144, cysteine 147, cysteine 161, cysteine 164, cysteine 187, cysteine 190, cysteine 201, and cysteine 204 each contribute to the Zn(2+) site. 4 CXXCXGXG motif repeats span residues 144–151, 161–168, 187–194, and 201–208; these read CTECHGSG, CSQCHGTG, CPACNGSG, and CKECSGKG.

It belongs to the DnaJ family. As to quaternary structure, homodimer. Zn(2+) serves as cofactor.

Its subcellular location is the cytoplasm. Participates actively in the response to hyperosmotic and heat shock by preventing the aggregation of stress-denatured proteins and by disaggregating proteins, also in an autonomous, DnaK-independent fashion. Unfolded proteins bind initially to DnaJ; upon interaction with the DnaJ-bound protein, DnaK hydrolyzes its bound ATP, resulting in the formation of a stable complex. GrpE releases ADP from DnaK; ATP binding to DnaK triggers the release of the substrate protein, thus completing the reaction cycle. Several rounds of ATP-dependent interactions between DnaJ, DnaK and GrpE are required for fully efficient folding. Also involved, together with DnaK and GrpE, in the DNA replication of plasmids through activation of initiation proteins. The sequence is that of Chaperone protein DnaJ from Desulfitobacterium hafniense (strain DSM 10664 / DCB-2).